Consider the following 302-residue polypeptide: Deoxyhypusine hydroxylase (302 aa).

Met1 bears the N-acetylmethionine mark. 5 HEAT-like PBS-type repeats span residues 54 to 80 (LKHE…VLQD), 87 to 113 (VRHE…YSTD), 175 to 201 (ERYR…GLQC), 206 to 232 (FRHE…TLAR), and 239 to 265 (VRHE…HIED). 3 residues coordinate Fe cation: His56, His89, and Glu90. 3 residues coordinate Fe cation: His208, His241, and Glu242.

Belongs to the deoxyhypusine hydroxylase family. The cofactor is Fe(2+).

It catalyses the reaction [eIF5A protein]-deoxyhypusine + AH2 + O2 = [eIF5A protein]-hypusine + A + H2O. It functions in the pathway protein modification; eIF5A hypusination. Its function is as follows. Catalyzes the hydroxylation of the N(6)-(4-aminobutyl)-L-lysine intermediate produced by deoxyhypusine synthase/DHPS on a critical lysine of the eukaryotic translation initiation factor 5A/eIF-5A. This is the second step of the post-translational modification of that lysine into an unusual amino acid residue named hypusine. Hypusination is unique to mature eIF-5A factor and is essential for its function. The protein is Deoxyhypusine hydroxylase of Mus musculus (Mouse).